The chain runs to 1444 residues: DNA polymerase III PolC-type (1444 aa).

The region spanning 428–584 (YCVFDVETTG…FDAEATAYLA (157 aa)) is the Exonuclease domain.

The protein belongs to the DNA polymerase type-C family. PolC subfamily.

It localises to the cytoplasm. It carries out the reaction DNA(n) + a 2'-deoxyribonucleoside 5'-triphosphate = DNA(n+1) + diphosphate. Required for replicative DNA synthesis. This DNA polymerase also exhibits 3' to 5' exonuclease activity. The chain is DNA polymerase III PolC-type from Listeria innocua serovar 6a (strain ATCC BAA-680 / CLIP 11262).